Reading from the N-terminus, the 114-residue chain is Large ribosomal subunit protein bL19 (114 aa).

The protein belongs to the bacterial ribosomal protein bL19 family.

In terms of biological role, this protein is located at the 30S-50S ribosomal subunit interface and may play a role in the structure and function of the aminoacyl-tRNA binding site. This chain is Large ribosomal subunit protein bL19, found in Bacillus mycoides (strain KBAB4) (Bacillus weihenstephanensis).